The sequence spans 276 residues: Diaminopimelate epimerase (276 aa).

Residues Asn13, Gln46, and Asn66 each coordinate substrate. The active-site Proton donor is Cys75. Substrate contacts are provided by residues Gly76–Asn77, Asn159, Asn192, and Glu210–Arg211. The Proton acceptor role is filled by Cys219. Residue Gly220 to Ser221 coordinates substrate.

It belongs to the diaminopimelate epimerase family. Homodimer.

The protein localises to the cytoplasm. It catalyses the reaction (2S,6S)-2,6-diaminopimelate = meso-2,6-diaminopimelate. The protein operates within amino-acid biosynthesis; L-lysine biosynthesis via DAP pathway; DL-2,6-diaminopimelate from LL-2,6-diaminopimelate: step 1/1. Catalyzes the stereoinversion of LL-2,6-diaminopimelate (L,L-DAP) to meso-diaminopimelate (meso-DAP), a precursor of L-lysine and an essential component of the bacterial peptidoglycan. In Vibrio parahaemolyticus serotype O3:K6 (strain RIMD 2210633), this protein is Diaminopimelate epimerase.